A 194-amino-acid polypeptide reads, in one-letter code: WASH complex subunit 3 (194 aa).

Residue Met-1 is modified to N-acetylmethionine. Residues 46 to 74 are a coiled coil; it reads TVCEEKLADLSLRIQQIETTLNILDAKLS. Polar residues predominate over residues 98-123; that stretch reads THSEATSEQSQQNSLQDSGPQESEVT. Disordered regions lie at residues 98–125 and 158–194; these read THSE…VTPE and SEGL…SFSD.

This sequence belongs to the CCDC53 family. Component of the WASH core complex also described as WASH regulatory complex (SHRC) composed of WASHC1, WASHC2, WASHC3, WASHC4 and WASHC5. The WASH core complex associates via WASHC2 with the F-actin-capping protein dimer (formed by CAPZA1, CAPZA2 or CAPZA3 and CAPZB) in a transient or substoichiometric manner which was initially described as WASH complex.

It localises to the early endosome. Its function is as follows. Acts as a component of the WASH core complex that functions as a nucleation-promoting factor (NPF) at the surface of endosomes, where it recruits and activates the Arp2/3 complex to induce actin polymerization, playing a key role in the fission of tubules that serve as transport intermediates during endosome sorting. This chain is WASH complex subunit 3, found in Bos taurus (Bovine).